A 334-amino-acid chain; its full sequence is HTH-type transcriptional regulator RegA (334 aa).

The region spanning 1-57 (MAASIKDVAREARVSIATVSRVLNNVDVVNEETKKKVMEAIKKLDYRPNIVARSLKT) is the HTH lacI-type domain. The H-T-H motif DNA-binding region spans 5–24 (IKDVAREARVSIATVSRVLN).

Functionally, involved in the regulation of amylase production. The chain is HTH-type transcriptional regulator RegA (regA) from Clostridium acetobutylicum (strain ATCC 824 / DSM 792 / JCM 1419 / IAM 19013 / LMG 5710 / NBRC 13948 / NRRL B-527 / VKM B-1787 / 2291 / W).